Consider the following 326-residue polypeptide: ATP-dependent 6-phosphofructokinase (326 aa).

G14 serves as a coordination point for ATP. 24 to 28 lines the ADP pocket; it reads RAVVR. ATP is bound by residues 75 to 76 and 105 to 108; these read RF and GNGS. Position 106 (N106) interacts with Mg(2+). 129–131 is a substrate binding site; the sequence is TID. The active-site Proton acceptor is D131. Residue R158 participates in ADP binding. Residues R166 and 173 to 175 contribute to the substrate site; that span reads MGR. Residues 189–191, K215, and 216–218 contribute to the ADP site; these read GAE and KSA. Substrate-binding positions include E225, R248, and 254–257; that span reads HTQR.

The protein belongs to the phosphofructokinase type A (PFKA) family. ATP-dependent PFK group I subfamily. Prokaryotic clade 'B1' sub-subfamily. As to quaternary structure, homotetramer. The cofactor is Mg(2+).

The protein resides in the cytoplasm. It catalyses the reaction beta-D-fructose 6-phosphate + ATP = beta-D-fructose 1,6-bisphosphate + ADP + H(+). It functions in the pathway carbohydrate degradation; glycolysis; D-glyceraldehyde 3-phosphate and glycerone phosphate from D-glucose: step 3/4. Allosterically activated by ADP and other diphosphonucleosides, and allosterically inhibited by phosphoenolpyruvate. Functionally, catalyzes the phosphorylation of D-fructose 6-phosphate to fructose 1,6-bisphosphate by ATP, the first committing step of glycolysis. This Coxiella burnetii (strain RSA 493 / Nine Mile phase I) protein is ATP-dependent 6-phosphofructokinase.